A 401-amino-acid chain; its full sequence is Mu-type opioid receptor (401 aa).

Residues 1 to 69 (MDSSADPRNA…CPPTGSPSMV (69 aa)) are Extracellular-facing. 5 N-linked (GlcNAc...) asparagine glycosylation sites follow: N9, N12, N34, N41, and N49. The helical transmembrane segment at 70 to 94 (TAITIMALYSIVCVVGLFGNFLVMY) threads the bilayer. Residues 95-107 (VIVRYTKMKTATN) are Cytoplasmic-facing. Residues 108–132 (IYIFNLALADALATSTLPFQSVNYL) form a helical membrane-spanning segment. Residues 133–143 (MGTWPFGTILC) are Extracellular-facing. The cysteines at positions 143 and 220 are disulfide-linked. A helical membrane pass occupies residues 144–166 (KIVISIDYYNMFTSIFTLCTMSV). The Cytoplasmic segment spans residues 167–186 (DRYIAVCHPVKALDFRTPRN). Y169 carries the post-translational modification Phosphotyrosine. The chain crosses the membrane as a helical span at residues 187-208 (AKIINVCNWILSSAIGLPVMFM). Residues 209–231 (ATTKYRNGSIDCALTFSHPTWYW) lie on the Extracellular side of the membrane. A helical membrane pass occupies residues 232–256 (ENLLKICVFIFAFIMPVLIITVCYG). Over 257-280 (LMILRLKSVRMLSGSKEKDRNLRR) the chain is Cytoplasmic. The chain crosses the membrane as a helical span at residues 281 to 307 (ITRMVLVVVAVFIVCWTPIHIYVIIKA). Topologically, residues 308-315 (LITIPETT) are extracellular. Residues 316-339 (FQTVSWHFCIALGYTNSCLNPVLY) form a helical membrane-spanning segment. The NPxxY; plays a role in stabilizing the activated conformation of the receptor motif lies at 335 to 339 (NPVLY). Residues 340–401 (AFLDENFKRC…NLEAETAPLP (62 aa)) lie on the Cytoplasmic side of the membrane. C354 is lipidated: S-palmitoyl cysteine. The interval 365-385 (NSARIRQNTRDHPSTANTVDR) is disordered. S366 is modified (phosphoserine). Residue T373 is modified to Phosphothreonine. At S378 the chain carries Phosphoserine. T397 is modified (phosphothreonine).

It belongs to the G-protein coupled receptor 1 family. As to quaternary structure, forms homooligomers and heterooligomers with other GPCRs, such as OPRD1, OPRK1, OPRL1, NPFFR2, ADRA2A, SSTR2, CNR1 and CCR5 (probably in dimeric forms). Interacts with heterotrimeric G proteins; interaction with a heterotrimeric complex containing GNAI1, GNB1 and GNG2 stabilizes the active conformation of the receptor and increases its affinity for endomorphin-2, the synthetic opioid peptide DAMGO and for morphinan agonists. Interacts with PPL; the interaction disrupts agonist-mediated G-protein activation. Interacts (via C-terminus) with DNAJB4 (via C-terminus). Interacts with calmodulin; the interaction inhibits the constitutive activity of OPRM1; it abolishes basal and attenuates agonist-stimulated G-protein coupling. Interacts with FLNA, PLD2, RANBP9 and WLS and GPM6A. Interacts with RTP4. Interacts with SYP and GNAS. Interacts with RGS9, RGS17, RGS20, RGS4, PPP1R9B and HINT1. Phosphorylated. Differentially phosphorylated in basal and agonist-induced conditions. Agonist-mediated phosphorylation modulates receptor internalization. Phosphorylated by GRK2 in a agonist-dependent manner. Phosphorylation at Tyr-169 requires receptor activation, is dependent on non-receptor protein tyrosine kinase Src and results in a decrease in agonist efficacy by reducing G-protein coupling efficiency. Phosphorylated on tyrosine residues; the phosphorylation is involved in agonist-induced G-protein-independent receptor down-regulation. Phosphorylation at Ser-378 is involved in G-protein-dependent but not beta-arrestin-dependent activation of the ERK pathway. In terms of processing, ubiquitinated. A basal ubiquitination seems not to be related to degradation. Ubiquitination is increased upon formation of OPRM1:OPRD1 oligomers leading to proteasomal degradation; the ubiquitination is diminished by RTP4.

The protein resides in the cell membrane. The protein localises to the cell projection. Its subcellular location is the axon. It is found in the perikaryon. It localises to the dendrite. The protein resides in the endosome. Functionally, receptor for endogenous opioids such as beta-endorphin and endomorphin. Receptor for natural and synthetic opioids including morphine, heroin, DAMGO, fentanyl, etorphine, buprenorphin and methadone. Also activated by enkephalin peptides, such as Met-enkephalin or Met-enkephalin-Arg-Phe, with higher affinity for Met-enkephalin-Arg-Phe. Agonist binding to the receptor induces coupling to an inactive GDP-bound heterotrimeric G-protein complex and subsequent exchange of GDP for GTP in the G-protein alpha subunit leading to dissociation of the G-protein complex with the free GTP-bound G-protein alpha and the G-protein beta-gamma dimer activating downstream cellular effectors. The agonist- and cell type-specific activity is predominantly coupled to pertussis toxin-sensitive G(i) and G(o) G alpha proteins, GNAI1, GNAI2, GNAI3 and GNAO1, and to a lesser extent to pertussis toxin-insensitive G alpha proteins GNAZ and GNA15. They mediate an array of downstream cellular responses, including inhibition of adenylate cyclase activity and both N-type and L-type calcium channels, activation of inward rectifying potassium channels, mitogen-activated protein kinase (MAPK), phospholipase C (PLC), phosphoinositide/protein kinase (PKC), phosphoinositide 3-kinase (PI3K) and regulation of NF-kappa-B. Also couples to adenylate cyclase stimulatory G alpha proteins. The selective temporal coupling to G-proteins and subsequent signaling can be regulated by RGSZ proteins, such as RGS9, RGS17 and RGS4. Phosphorylation by members of the GPRK subfamily of Ser/Thr protein kinases and association with beta-arrestins is involved in short-term receptor desensitization. Beta-arrestins associate with the GPRK-phosphorylated receptor and uncouple it from the G-protein thus terminating signal transduction. The phosphorylated receptor is internalized through endocytosis via clathrin-coated pits which involves beta-arrestins. The activation of the ERK pathway occurs either in a G-protein-dependent or a beta-arrestin-dependent manner and is regulated by agonist-specific receptor phosphorylation. Acts as a class A G-protein coupled receptor (GPCR) which dissociates from beta-arrestin at or near the plasma membrane and undergoes rapid recycling. Receptor down-regulation pathways are varying with the agonist and occur dependent or independent of G-protein coupling. Endogenous ligands induce rapid desensitization, endocytosis and recycling. Heterooligomerization with other GPCRs can modulate agonist binding, signaling and trafficking properties. Involved in neurogenesis. The chain is Mu-type opioid receptor (OPRM1) from Sus scrofa (Pig).